The following is a 612-amino-acid chain: Elongation factor 4 (612 aa).

The tr-type G domain occupies 11–193 (KHIRNFSIVA…EIVKKVPAPD (183 aa)). GTP-binding positions include 23–28 (DHGKST) and 140–143 (NKID).

Belongs to the TRAFAC class translation factor GTPase superfamily. Classic translation factor GTPase family. LepA subfamily.

The protein localises to the cell membrane. It carries out the reaction GTP + H2O = GDP + phosphate + H(+). Functionally, required for accurate and efficient protein synthesis under certain stress conditions. May act as a fidelity factor of the translation reaction, by catalyzing a one-codon backward translocation of tRNAs on improperly translocated ribosomes. Back-translocation proceeds from a post-translocation (POST) complex to a pre-translocation (PRE) complex, thus giving elongation factor G a second chance to translocate the tRNAs correctly. Binds to ribosomes in a GTP-dependent manner. This chain is Elongation factor 4, found in Lactobacillus johnsonii (strain CNCM I-12250 / La1 / NCC 533).